A 475-amino-acid chain; its full sequence is Ribulose bisphosphate carboxylase large chain (475 aa).

Asn123 and Thr173 together coordinate substrate. The Proton acceptor role is filled by Lys175. Lys177 is a substrate binding site. Positions 201, 203, and 204 each coordinate Mg(2+). Lys201 carries the N6-carboxylysine modification. Residue His294 is the Proton acceptor of the active site. Arg295, His327, and Ser379 together coordinate substrate.

The protein belongs to the RuBisCO large chain family. Type I subfamily. As to quaternary structure, heterohexadecamer of 8 large chains and 8 small chains; disulfide-linked. The disulfide link is formed within the large subunit homodimers. Interacts with assembly factor Raf1 which helps form the holoenzyme, most interaction (and folding) occurs in the cytoplasm. Requires Mg(2+) as cofactor. In terms of processing, the disulfide bond which can form in the large chain dimeric partners within the hexadecamer appears to be associated with oxidative stress and protein turnover.

It localises to the carboxysome. The protein localises to the cytoplasm. It carries out the reaction 2 (2R)-3-phosphoglycerate + 2 H(+) = D-ribulose 1,5-bisphosphate + CO2 + H2O. The catalysed reaction is D-ribulose 1,5-bisphosphate + O2 = 2-phosphoglycolate + (2R)-3-phosphoglycerate + 2 H(+). Functionally, ruBisCO catalyzes two reactions: the carboxylation of D-ribulose 1,5-bisphosphate, the primary event in carbon dioxide fixation, as well as the oxidative fragmentation of the pentose substrate in the photorespiration process. Both reactions occur simultaneously and in competition at the same active site. This chain is Ribulose bisphosphate carboxylase large chain, found in Thermosynechococcus vestitus (strain NIES-2133 / IAM M-273 / BP-1).